The following is a 284-amino-acid chain: Bifunctional protein FolD (284 aa).

Residues 165-167 (GRS), serine 190, and isoleucine 231 each bind NADP(+).

The protein belongs to the tetrahydrofolate dehydrogenase/cyclohydrolase family. As to quaternary structure, homodimer.

The enzyme catalyses (6R)-5,10-methylene-5,6,7,8-tetrahydrofolate + NADP(+) = (6R)-5,10-methenyltetrahydrofolate + NADPH. It catalyses the reaction (6R)-5,10-methenyltetrahydrofolate + H2O = (6R)-10-formyltetrahydrofolate + H(+). It functions in the pathway one-carbon metabolism; tetrahydrofolate interconversion. Functionally, catalyzes the oxidation of 5,10-methylenetetrahydrofolate to 5,10-methenyltetrahydrofolate and then the hydrolysis of 5,10-methenyltetrahydrofolate to 10-formyltetrahydrofolate. This Streptococcus thermophilus (strain CNRZ 1066) protein is Bifunctional protein FolD.